A 341-amino-acid polypeptide reads, in one-letter code: GTPase Obg (341 aa).

Residues 1–159 enclose the Obg domain; that stretch reads MKFVDEALIK…RNLRLELRVL (159 aa). The interval 128 to 150 is disordered; that stretch reads TRYKSSVNRSPRQTTPGSPGESR. The segment covering 129–144 has biased composition (polar residues); sequence RYKSSVNRSPRQTTPG. An OBG-type G domain is found at 160-334; sequence ADVGLLGLPN…LCYALMQLID (175 aa). GTP-binding positions include 166 to 173, 191 to 195, 213 to 216, 283 to 286, and 315 to 317; these read GLPNAGKS, FTTLH, DIPG, NKID, and SAI. Residues serine 173 and threonine 193 each coordinate Mg(2+).

Belongs to the TRAFAC class OBG-HflX-like GTPase superfamily. OBG GTPase family. Monomer. Mg(2+) serves as cofactor.

The protein localises to the cytoplasm. An essential GTPase which binds GTP, GDP and possibly (p)ppGpp with moderate affinity, with high nucleotide exchange rates and a fairly low GTP hydrolysis rate. Plays a role in control of the cell cycle, stress response, ribosome biogenesis and in those bacteria that undergo differentiation, in morphogenesis control. In Legionella pneumophila (strain Paris), this protein is GTPase Obg.